Here is a 249-residue protein sequence, read N- to C-terminus: MSGHSKWATTKHKKAVIDAKRGKMFAKLIKNVEVAARTGGGDPAGNPTLYDAIQKAKKNSVPNDNIDRAVKRGSGLEAGGADYQTVMYEGYGPNGVALLIECLTDNRNRAATEVRTALTRNGGSFADAGSVSYLFSRKGVVIVAKAGTTEDDVMLAVLDAGAEEVNDLGESFEVLSEPGDLVAVRTALQDAGIEYESAESSLVPSVSVPLDEDGARKILKLIDVLEDSDDVQNVYANFDVSDEMLARLG.

Belongs to the TACO1 family.

The protein resides in the cytoplasm. The protein is Probable transcriptional regulatory protein Sare_1779 of Salinispora arenicola (strain CNS-205).